The primary structure comprises 382 residues: Pyrimidine monooxygenase RutA (382 aa).

Residues 68–69 (IK), Asn134, Glu143, 159–160 (RY), and Ser209 contribute to the FMN site.

This sequence belongs to the NtaA/SnaA/DszA monooxygenase family. RutA subfamily.

It carries out the reaction uracil + FMNH2 + NADH + O2 = (Z)-3-ureidoacrylate + FMN + NAD(+) + H2O + H(+). The enzyme catalyses thymine + FMNH2 + NADH + O2 = (Z)-2-methylureidoacrylate + FMN + NAD(+) + H2O + H(+). Its function is as follows. Catalyzes the pyrimidine ring opening between N-3 and C-4 by an unusual flavin hydroperoxide-catalyzed mechanism, adding oxygen atoms in the process to yield ureidoacrylate peracid, that immediately reacts with FMN forming ureidoacrylate and FMN-N(5)-oxide. The FMN-N(5)-oxide reacts spontaneously with NADH to produce FMN. Requires the flavin reductase RutF to regenerate FMN in vivo. The protein is Pyrimidine monooxygenase RutA of Escherichia coli O150:H5 (strain SE15).